The sequence spans 492 residues: Catalase isozyme 1 (492 aa).

Active-site residues include histidine 65 and asparagine 138. Tyrosine 348 contributes to the heme binding site.

This sequence belongs to the catalase family. In terms of assembly, homotetramer. Heme serves as cofactor.

It localises to the peroxisome. The catalysed reaction is 2 H2O2 = O2 + 2 H2O. In terms of biological role, occurs in almost all aerobically respiring organisms and serves to protect cells from the toxic effects of hydrogen peroxide. This chain is Catalase isozyme 1 (CAT1), found in Solanum lycopersicum (Tomato).